Here is a 176-residue protein sequence, read N- to C-terminus: NAD(P)H-quinone oxidoreductase subunit 6, chloroplastic (176 aa).

5 consecutive transmembrane segments (helical) span residues 10–30 (FLLV…VLLP), 32–52 (PIFS…LYIL), 61–81 (AQLL…VMFM), 92–112 (LWTV…FSLM), and 152–172 (FFLP…GAIS).

Belongs to the complex I subunit 6 family. As to quaternary structure, NDH is composed of at least 16 different subunits, 5 of which are encoded in the nucleus.

It localises to the plastid. The protein localises to the chloroplast thylakoid membrane. It carries out the reaction a plastoquinone + NADH + (n+1) H(+)(in) = a plastoquinol + NAD(+) + n H(+)(out). It catalyses the reaction a plastoquinone + NADPH + (n+1) H(+)(in) = a plastoquinol + NADP(+) + n H(+)(out). In terms of biological role, NDH shuttles electrons from NAD(P)H:plastoquinone, via FMN and iron-sulfur (Fe-S) centers, to quinones in the photosynthetic chain and possibly in a chloroplast respiratory chain. The immediate electron acceptor for the enzyme in this species is believed to be plastoquinone. Couples the redox reaction to proton translocation, and thus conserves the redox energy in a proton gradient. The protein is NAD(P)H-quinone oxidoreductase subunit 6, chloroplastic (ndhG) of Nasturtium officinale (Watercress).